The sequence spans 304 residues: 15-cis-phytoene synthase (304 aa).

It belongs to the phytoene/squalene synthase family. Requires ATP as cofactor. The cofactor is Mn(2+). It depends on Mg(2+) as a cofactor.

The enzyme catalyses 2 (2E,6E,10E)-geranylgeranyl diphosphate = 15-cis-phytoene + 2 diphosphate. Its pathway is carotenoid biosynthesis; astaxanthin biosynthesis. The protein operates within carotenoid biosynthesis; phytoene biosynthesis. In terms of biological role, involved in the biosynthesis of carotenoids for the production of astaxanthin. Catalyzes the condensation of two molecules of geranylgeranyl diphosphate (GGPP) to give prephytoene diphosphate (PPPP) and the subsequent rearrangement of the cyclopropylcarbinyl intermediate to yield 15-cis phytoene. The polypeptide is 15-cis-phytoene synthase (crtB) (Paracoccus sp. (strain N81106 / MBIC 01143) (Agrobacterium aurantiacum)).